We begin with the raw amino-acid sequence, 360 residues long: Pyrimidine monooxygenase RutA (360 aa).

Residues 49-50, Asn115, Glu124, 140-141, and Ser190 each bind FMN; these read IK and RY.

It belongs to the NtaA/SnaA/DszA monooxygenase family. RutA subfamily.

It catalyses the reaction uracil + FMNH2 + NADH + O2 = (Z)-3-ureidoacrylate + FMN + NAD(+) + H2O + H(+). It carries out the reaction thymine + FMNH2 + NADH + O2 = (Z)-2-methylureidoacrylate + FMN + NAD(+) + H2O + H(+). Its function is as follows. Catalyzes the pyrimidine ring opening between N-3 and C-4 by an unusual flavin hydroperoxide-catalyzed mechanism, adding oxygen atoms in the process to yield ureidoacrylate peracid, that immediately reacts with FMN forming ureidoacrylate and FMN-N(5)-oxide. The FMN-N(5)-oxide reacts spontaneously with NADH to produce FMN. Requires the flavin reductase RutF to regenerate FMN in vivo. The polypeptide is Pyrimidine monooxygenase RutA (Pseudomonas savastanoi pv. phaseolicola (strain 1448A / Race 6) (Pseudomonas syringae pv. phaseolicola (strain 1448A / Race 6))).